The sequence spans 325 residues: UPF0285 protein MmarC5_0962 (325 aa).

The protein belongs to the UPF0285 family.

The sequence is that of UPF0285 protein MmarC5_0962 from Methanococcus maripaludis (strain C5 / ATCC BAA-1333).